A 90-amino-acid polypeptide reads, in one-letter code: Acylphosphatase (90 aa).

The region spanning 5–90 (CERFIVKGHV…YKPFRGFKIL (86 aa)) is the Acylphosphatase-like domain. Catalysis depends on residues R20 and N38.

The protein belongs to the acylphosphatase family.

The catalysed reaction is an acyl phosphate + H2O = a carboxylate + phosphate + H(+). This chain is Acylphosphatase (acyP), found in Vibrio parahaemolyticus serotype O3:K6 (strain RIMD 2210633).